We begin with the raw amino-acid sequence, 352 residues long: Molybdenum import ATP-binding protein ModC (352 aa).

Positions 1-229 (MLQLDFHQQL…SALRPWLPKD (229 aa)) constitute an ABC transporter domain. Residue 31–38 (GVSGAGKT) participates in ATP binding. A Mop domain is found at 289 to 352 (KSSIRNVLRA…AQIKSVSITA (64 aa)).

This sequence belongs to the ABC transporter superfamily. Molybdate importer (TC 3.A.1.8) family. The complex is composed of two ATP-binding proteins (ModC), two transmembrane proteins (ModB) and a solute-binding protein (ModA).

Its subcellular location is the cell inner membrane. It catalyses the reaction molybdate(out) + ATP + H2O = molybdate(in) + ADP + phosphate + H(+). Part of the ABC transporter complex ModABC involved in molybdenum import. Responsible for energy coupling to the transport system. This is Molybdenum import ATP-binding protein ModC from Pectobacterium atrosepticum (strain SCRI 1043 / ATCC BAA-672) (Erwinia carotovora subsp. atroseptica).